The chain runs to 349 residues: Isopentenyl-diphosphate delta-isomerase (349 aa).

6–7 (RK) is a substrate binding site. Residues 62-64 (AMT), Ser-93, and Asn-122 contribute to the FMN site. Gln-152 lines the substrate pocket. Glu-153 serves as a coordination point for Mg(2+). Residues Lys-184, Thr-214, 258–259 (GG), and 280–281 (AG) contribute to the FMN site.

It belongs to the IPP isomerase type 2 family. As to quaternary structure, homooctamer. Dimer of tetramers. FMN is required as a cofactor. It depends on NADPH as a cofactor. Requires Mg(2+) as cofactor.

It is found in the cytoplasm. It carries out the reaction isopentenyl diphosphate = dimethylallyl diphosphate. Involved in the biosynthesis of isoprenoids. Catalyzes the 1,3-allylic rearrangement of the homoallylic substrate isopentenyl (IPP) to its allylic isomer, dimethylallyl diphosphate (DMAPP). The sequence is that of Isopentenyl-diphosphate delta-isomerase from Bacillus cereus (strain ZK / E33L).